The chain runs to 916 residues: Dual serine/threonine and tyrosine protein kinase (916 aa).

Residues 1-19 (MQRDGTRSARRMDEGDRRT) show a composition bias toward basic and acidic residues. The disordered stretch occupies residues 1 to 27 (MQRDGTRSARRMDEGDRRTGSAGRSGS). The region spanning 641–895 (PRIGRELGRG…PLMGIVQPML (255 aa)) is the Protein kinase domain. Residues 647 to 655 (LGRGQYGVV) and K670 each bind ATP. The Proton acceptor role is filled by D766.

It belongs to the protein kinase superfamily. Ser/Thr protein kinase family.

The protein localises to the cytoplasm. Its subcellular location is the cell membrane. The protein resides in the apical cell membrane. It localises to the basolateral cell membrane. It is found in the cell junction. It catalyses the reaction L-seryl-[protein] + ATP = O-phospho-L-seryl-[protein] + ADP + H(+). It carries out the reaction L-threonyl-[protein] + ATP = O-phospho-L-threonyl-[protein] + ADP + H(+). The catalysed reaction is L-tyrosyl-[protein] + ATP = O-phospho-L-tyrosyl-[protein] + ADP + H(+). Functionally, may act as a positive regulator of ERK phosphorylation downstream of fibroblast growth factor-receptor activation. May induce both caspase-dependent apoptosis and caspase-independent cell death. May play a role in the embryonic development. In Xenopus laevis (African clawed frog), this protein is Dual serine/threonine and tyrosine protein kinase (dstyk).